The primary structure comprises 365 residues: Histidinol-phosphate aminotransferase (365 aa).

Lys220 carries the post-translational modification N6-(pyridoxal phosphate)lysine.

The protein belongs to the class-II pyridoxal-phosphate-dependent aminotransferase family. Histidinol-phosphate aminotransferase subfamily. Homodimer. Requires pyridoxal 5'-phosphate as cofactor.

It carries out the reaction L-histidinol phosphate + 2-oxoglutarate = 3-(imidazol-4-yl)-2-oxopropyl phosphate + L-glutamate. It functions in the pathway amino-acid biosynthesis; L-histidine biosynthesis; L-histidine from 5-phospho-alpha-D-ribose 1-diphosphate: step 7/9. This is Histidinol-phosphate aminotransferase from Xylella fastidiosa (strain 9a5c).